A 296-amino-acid polypeptide reads, in one-letter code: Cobalamin trafficking protein CblD (296 aa).

The N-terminal 38 residues, 1-38 (MAHVLCNRARLVSYLPGFCSLVKRVINPRAFSTAGSSG), are a transit peptide targeting the mitochondrion. Residue Lys203 is modified to N6-acetyllysine.

In terms of assembly, heterodimer with MMACHC. Forms a multiprotein complex with MMACHC, MTR and MTRR.

The protein resides in the cytoplasm. The protein localises to the mitochondrion. In terms of biological role, involved in cobalamin metabolism and trafficking. Plays a role in regulating the biosynthesis and the proportion of two coenzymes, methylcob(III)alamin (MeCbl) and 5'-deoxyadenosylcobalamin (AdoCbl). Promotes oxidation of cob(II)alamin bound to MMACHC. The processing of cobalamin in the cytosol occurs in a multiprotein complex composed of at least MMACHC, MMADHC, MTRR (methionine synthase reductase) and MTR (methionine synthase) which may contribute to shuttle safely and efficiently cobalamin towards MTR in order to produce methionine. In Rattus norvegicus (Rat), this protein is Cobalamin trafficking protein CblD (Mmadhc).